A 585-amino-acid chain; its full sequence is Arginine--tRNA ligase (585 aa).

The 'HIGH' region signature appears at 131 to 141 (ANPTGPMHVGH).

The protein belongs to the class-I aminoacyl-tRNA synthetase family. As to quaternary structure, monomer.

It localises to the cytoplasm. The enzyme catalyses tRNA(Arg) + L-arginine + ATP = L-arginyl-tRNA(Arg) + AMP + diphosphate. This is Arginine--tRNA ligase from Bartonella quintana (strain Toulouse) (Rochalimaea quintana).